The following is a 335-amino-acid chain: Taste receptor type 2 member 119 (335 aa).

The Extracellular segment spans residues 1-7 (MMEGHML). A helical transmembrane segment spans residues 8 to 28 (FFLLVVVVQFLTGVLANGLIV). The Cytoplasmic portion of the chain corresponds to 29-43 (VVNAIDLIMWKKMAP). The chain crosses the membrane as a helical span at residues 44–64 (LDLLLFCLATSRIILQLCILF). The Extracellular portion of the chain corresponds to 65–81 (AQLGLSCLVRHTLFADN). N-linked (GlcNAc...) asparagine glycosylation occurs at Asn81. Residues 82–102 (VTFVYIINELSLWFATWLGVF) form a helical membrane-spanning segment. At 103 to 124 (YCAKIATIPHPLFLWLKMRISR) the chain is on the cytoplasmic side. The chain crosses the membrane as a helical span at residues 125-145 (LVPWLILASVVYVTVTTFIHS). Topologically, residues 146-176 (RETSELPKQIFISFFSKNTTRVRPAHATLLS) are extracellular. Asn163 carries N-linked (GlcNAc...) asparagine glycosylation. The helical transmembrane segment at 177–197 (VFVFGLTLPFLIFTVAVLLLL) threads the bilayer. Residues 198 to 224 (SSLWNHSRQMRTMVGTREPSRHALVSA) lie on the Cytoplasmic side of the membrane. Residues 225–245 (MLSILSFLILYLSHDMVAVLI) form a helical membrane-spanning segment. Over 246-256 (CTQGLHFGSRT) the chain is Extracellular. A helical transmembrane segment spans residues 257–277 (FAFCLLVIGMYPSLHSIVLIL). At 278–335 (GNPKLKRNAKTFIVHCKCCHCARAWVTSRNPRLSDLPVPATHHSANKTSCSEACIMPS) the chain is on the cytoplasmic side.

Belongs to the G-protein coupled receptor T2R family. In terms of tissue distribution, expressed in subsets of taste receptor cells of the tongue and palate epithelium and exclusively in gustducin-positive cells. Expressed in 15% taste bud cells in circumvallate and foliate papillae but only in 2% in fungiform papillae. Expressed in the gastro and duodenal tissue. Not expressed in colon, liver, heart and kidney.

Its subcellular location is the membrane. Functionally, gustducin-coupled receptor implicated in the perception of bitter compounds in the oral cavity and the gastrointestinal tract. Signals through PLCB2 and the calcium-regulated cation channel TRPM5. This is Taste receptor type 2 member 119 (Tas2r119) from Mus musculus (Mouse).